The primary structure comprises 286 residues: uncharacterized protein (286 aa).

The segment at residues 1–31 (MKKMSRRQFLKGMFGALAAGALTAGGGYGYA) is a signal peptide (tat-type signal). Positions 65, 67, 97, 130, 221, and 223 each coordinate a divalent metal cation.

The protein belongs to the metallophosphoesterase superfamily. A divalent metal cation serves as cofactor. Post-translationally, predicted to be exported by the Tat system. The position of the signal peptide cleavage has not been experimentally proven.

This is an uncharacterized protein from Bacillus subtilis (strain 168).